We begin with the raw amino-acid sequence, 491 residues long: UDP-N-acetylmuramate--L-alanine ligase (491 aa).

Position 126 to 132 (126 to 132) interacts with ATP; the sequence is GTHGKTT.

The protein belongs to the MurCDEF family.

It is found in the cytoplasm. The enzyme catalyses UDP-N-acetyl-alpha-D-muramate + L-alanine + ATP = UDP-N-acetyl-alpha-D-muramoyl-L-alanine + ADP + phosphate + H(+). Its pathway is cell wall biogenesis; peptidoglycan biosynthesis. Its function is as follows. Cell wall formation. This chain is UDP-N-acetylmuramate--L-alanine ligase, found in Yersinia pestis (strain Pestoides F).